The sequence spans 860 residues: Valine--tRNA ligase (860 aa).

Positions 53–63 (PNLTGILHIGH) match the 'HIGH' region motif. The 'KMSKS' region signature appears at 527–531 (KMSKS). Lys530 contacts ATP. Residues 794 to 860 (QDKTKIVDKL…LKQDKLNSLK (67 aa)) are a coiled coil.

It belongs to the class-I aminoacyl-tRNA synthetase family. ValS type 1 subfamily. As to quaternary structure, monomer.

It is found in the cytoplasm. It catalyses the reaction tRNA(Val) + L-valine + ATP = L-valyl-tRNA(Val) + AMP + diphosphate. In terms of biological role, catalyzes the attachment of valine to tRNA(Val). As ValRS can inadvertently accommodate and process structurally similar amino acids such as threonine, to avoid such errors, it has a 'posttransfer' editing activity that hydrolyzes mischarged Thr-tRNA(Val) in a tRNA-dependent manner. This chain is Valine--tRNA ligase, found in Mycoplasmoides gallisepticum (strain R(low / passage 15 / clone 2)) (Mycoplasma gallisepticum).